A 141-amino-acid chain; its full sequence is Pancreatic progenitor cell differentiation and proliferation factor-like protein (141 aa).

The disordered stretch occupies residues 72–141; it reads DQSACGGNGP…GAPKDTNSPQ (70 aa). Over residues 95 to 105 the composition is skewed to low complexity; that stretch reads SLLQQEESQLL. Polar residues predominate over residues 112-122; sequence GTVNRFRNSQT.

The protein belongs to the PPDPF family.

The chain is Pancreatic progenitor cell differentiation and proliferation factor-like protein from Bos taurus (Bovine).